The chain runs to 110 residues: Parvalbumin alpha (110 aa).

2 EF-hand domains span residues Lys-39–Asn-74 and Leu-78–Ser-110. Asp-52, Asp-54, Ser-56, Phe-58, Glu-60, Glu-63, Asp-91, Asp-93, Asp-95, Lys-97, and Glu-102 together coordinate Ca(2+).

Belongs to the parvalbumin family.

Its function is as follows. In muscle, parvalbumin is thought to be involved in relaxation after contraction. It binds two calcium ions. The polypeptide is Parvalbumin alpha (Aquarana catesbeiana (American bullfrog)).